The primary structure comprises 146 residues: Urease accessory protein UreE 1 (146 aa).

This sequence belongs to the UreE family.

It is found in the cytoplasm. Involved in urease metallocenter assembly. Binds nickel. Probably functions as a nickel donor during metallocenter assembly. The polypeptide is Urease accessory protein UreE 1 (Pseudomonas syringae pv. syringae (strain B728a)).